The chain runs to 337 residues: Ketol-acid reductoisomerase (NADP(+)) (337 aa).

The KARI N-terminal Rossmann domain maps to 1–183; sequence MAIETLYDSD…GGARAGVIPT (183 aa). NADP(+) contacts are provided by residues 26–29, arginine 49, serine 52, serine 54, and 84–87; these read YGSQ and DTSQ. Histidine 109 is an active-site residue. Glycine 135 is a binding site for NADP(+). The KARI C-terminal knotted domain occupies 184-329; the sequence is TFKDETETDL…SQLRDLMSWV (146 aa). Residues aspartate 192, glutamate 196, glutamate 228, and glutamate 232 each coordinate Mg(2+). Serine 253 contacts substrate.

The protein belongs to the ketol-acid reductoisomerase family. Requires Mg(2+) as cofactor.

It catalyses the reaction (2R)-2,3-dihydroxy-3-methylbutanoate + NADP(+) = (2S)-2-acetolactate + NADPH + H(+). The catalysed reaction is (2R,3R)-2,3-dihydroxy-3-methylpentanoate + NADP(+) = (S)-2-ethyl-2-hydroxy-3-oxobutanoate + NADPH + H(+). Its pathway is amino-acid biosynthesis; L-isoleucine biosynthesis; L-isoleucine from 2-oxobutanoate: step 2/4. It functions in the pathway amino-acid biosynthesis; L-valine biosynthesis; L-valine from pyruvate: step 2/4. Its function is as follows. Involved in the biosynthesis of branched-chain amino acids (BCAA). Catalyzes an alkyl-migration followed by a ketol-acid reduction of (S)-2-acetolactate (S2AL) to yield (R)-2,3-dihydroxy-isovalerate. In the isomerase reaction, S2AL is rearranged via a Mg-dependent methyl migration to produce 3-hydroxy-3-methyl-2-ketobutyrate (HMKB). In the reductase reaction, this 2-ketoacid undergoes a metal-dependent reduction by NADPH to yield (R)-2,3-dihydroxy-isovalerate. The chain is Ketol-acid reductoisomerase (NADP(+)) from Corynebacterium aurimucosum (strain ATCC 700975 / DSM 44827 / CIP 107346 / CN-1) (Corynebacterium nigricans).